Consider the following 281-residue polypeptide: Pantothenate synthetase (281 aa).

26–33 contributes to the ATP binding site; the sequence is MGSLHEGH. Histidine 33 acts as the Proton donor in catalysis. A (R)-pantoate-binding site is contributed by glutamine 57. Glutamine 57 is a beta-alanine binding site. 144 to 147 is a binding site for ATP; that stretch reads GKKD. Residue glutamine 150 participates in (R)-pantoate binding. Residues alanine 173 and 181 to 184 each bind ATP; that span reads LSSR.

Belongs to the pantothenate synthetase family. Homodimer.

The protein localises to the cytoplasm. The enzyme catalyses (R)-pantoate + beta-alanine + ATP = (R)-pantothenate + AMP + diphosphate + H(+). Its pathway is cofactor biosynthesis; (R)-pantothenate biosynthesis; (R)-pantothenate from (R)-pantoate and beta-alanine: step 1/1. Its function is as follows. Catalyzes the condensation of pantoate with beta-alanine in an ATP-dependent reaction via a pantoyl-adenylate intermediate. The sequence is that of Pantothenate synthetase from Methylibium petroleiphilum (strain ATCC BAA-1232 / LMG 22953 / PM1).